We begin with the raw amino-acid sequence, 327 residues long: Tartrate-resistant acid phosphatase type 5 (327 aa).

The first 22 residues, 1 to 22 (MDTWMVLLGLQILLLPLLAHCT), serve as a signal peptide directing secretion. Aspartate 35, aspartate 73, tyrosine 76, and asparagine 112 together coordinate Fe cation. Residues asparagine 118 and asparagine 149 are each glycosylated (N-linked (GlcNAc...) asparagine). Cysteine 163 and cysteine 221 are disulfide-bonded. Fe cation is bound by residues histidine 207, histidine 242, and histidine 244.

Exists either as monomer or, after proteolytic processing, as a dimer of two chains linked by disulfide bond(s). The cofactor is Fe cation. Characteristic constituent of osteoclasts and some mononuclear preosteoclasts. Preferentially expressed in skeletal tissues.

It localises to the lysosome. It catalyses the reaction a phosphate monoester + H2O = an alcohol + phosphate. May play a role in the process of bone resorption. The osteoclastic trap acts on nucleotide tri- and diphosphates with higher affinity, compared with other substrates. The sequence is that of Tartrate-resistant acid phosphatase type 5 (Acp5) from Rattus norvegicus (Rat).